Reading from the N-terminus, the 112-residue chain is ATP-dependent Clp protease adapter protein ClpS (112 aa).

It belongs to the ClpS family. As to quaternary structure, binds to the N-terminal domain of the chaperone ClpA.

Functionally, involved in the modulation of the specificity of the ClpAP-mediated ATP-dependent protein degradation. This is ATP-dependent Clp protease adapter protein ClpS from Rhodococcus jostii (strain RHA1).